A 370-amino-acid chain; its full sequence is Prolactin-releasing peptide receptor (370 aa).

The Extracellular segment spans residues 1–62 (MASLPTQGPA…LQLVHQLKGL (62 aa)). N-linked (GlcNAc...) asparagine glycosylation is found at asparagine 27 and asparagine 36. A helical transmembrane segment spans residues 63 to 83 (IVLLYSIVVVVGLVGNCLLVL). At 84–101 (VIARVRRLHNVTNFLIGN) the chain is on the cytoplasmic side. Residues 102–122 (LALSDVLMCTACVPLTLAYAF) form a helical membrane-spanning segment. The Extracellular portion of the chain corresponds to 123–126 (EPRG). The helical transmembrane segment at 127–147 (WVFGGGLCHLVFFLQPVTVYV) threads the bilayer. Cysteine 134 and cysteine 211 form a disulfide bridge. Topologically, residues 148–175 (SVFTLTTIAVDRYVVLVHPLRRRISLRF) are cytoplasmic. A helical membrane pass occupies residues 176–196 (SAYAVLAIWALSAVLALPAAL). Residues 197–225 (HTYHVELKPHRVRLCEEFWGSQERQRQLY) lie on the Extracellular side of the membrane. A helical membrane pass occupies residues 226–246 (AWGLLLVTYLLPLLVILLSYV). The Cytoplasmic segment spans residues 247 to 276 (RVSVNLRNRVVPGCVTQSQADWDRARRRRT). A helical membrane pass occupies residues 277 to 297 (FCLLVVVVVVFAVCWLPLHVF). At 298 to 317 (NLLRDLDPHAIDPYAFGLVQ) the chain is on the extracellular side. A helical transmembrane segment spans residues 318 to 338 (LLCHWLAMSSACYNPFIYAWL). At 339-369 (HDSFREELRKLLLAWPRKIAPHGQSMTVSVV) the chain is on the cytoplasmic side. Residues 365-370 (TVSVVI) form a required for interaction with GRIP1, GRIP2 and PICK1 region.

This sequence belongs to the G-protein coupled receptor 1 family. Interacts through its C-terminal region with the PDZ domain-containing proteins GRIP1, GRIP2 and PICK1. Interacts with PDZ domains 4 and 5 of GRIP1 and with the PDZ domain of PICK1.

The protein resides in the cell membrane. Functionally, receptor for prolactin-releasing peptide (PrRP). Implicated in lactation, regulation of food intake and pain-signal processing. In Bos taurus (Bovine), this protein is Prolactin-releasing peptide receptor (PRLHR).